The chain runs to 149 residues: Large ribosomal subunit protein uL15 (149 aa).

The disordered stretch occupies residues 1-64 (MVELHDLQPH…GQTPLYMRIP (64 aa)). Basic residues predominate over residues 31 to 40 (TAGRGHKGQK).

Belongs to the universal ribosomal protein uL15 family. Part of the 50S ribosomal subunit.

Its function is as follows. Binds to the 23S rRNA. The protein is Large ribosomal subunit protein uL15 of Aquifex aeolicus (strain VF5).